We begin with the raw amino-acid sequence, 236 residues long: Homeobox protein notochord (236 aa).

Residues 138 to 197 (MKRIRTVFTPEQLEKLEKEFLKQQYMVGTERVDLASTLNLTETQVKVWFQNRRIKWRKQS) constitute a DNA-binding region (homeobox). Residues 209-236 (GVIPADSSDHTDDSRETEEDEDDLDVEL) form a disordered region. Residues 223-236 (RETEEDEDDLDVEL) show a composition bias toward acidic residues.

Expressed throughout the embryo during pre-gastrula stages. Localized to the dorsal lip of the blastopore (Spemann organizer) during early gastrulation, after which expression continues in tissues derived from the organizer. Expressed in the notochord during mid-gastrulation. During neurulation, expressed in the notochord, archenteron roof and the prospective floor plate. Also expressed in the region that will become the epiphysis, the pineal body precursor. By the early tailbud stages, expression is limited to posterior notochord and floor plate before becoming restricted to the tip of the tail in the tadpole.

The protein resides in the nucleus. Its function is as follows. Transcriptional repressor. Plays a fundamental role in notochord formation, acting within the mesodermal region. The protein is Homeobox protein notochord (noto) of Xenopus laevis (African clawed frog).